Here is a 311-residue protein sequence, read N- to C-terminus: HPr kinase/phosphorylase (311 aa).

Active-site residues include H138 and K159. 153 to 160 serves as a coordination point for ATP; it reads GSSGIGKS. S160 serves as a coordination point for Mg(2+). D177 serves as the catalytic Proton acceptor; for phosphorylation activity. Proton donor; for dephosphorylation activity. The interval 201-210 is important for the catalytic mechanism of both phosphorylation and dephosphorylation; it reads LEIRGVGIIN. Residue E202 coordinates Mg(2+). Residue R243 is part of the active site. An important for the catalytic mechanism of dephosphorylation region spans residues 264–269; that stretch reads PVRPGR.

The protein belongs to the HPrK/P family. In terms of assembly, homohexamer. Mg(2+) serves as cofactor.

The enzyme catalyses [HPr protein]-L-serine + ATP = [HPr protein]-O-phospho-L-serine + ADP + H(+). The catalysed reaction is [HPr protein]-O-phospho-L-serine + phosphate + H(+) = [HPr protein]-L-serine + diphosphate. Catalyzes the ATP- as well as the pyrophosphate-dependent phosphorylation of a specific serine residue in HPr, a phosphocarrier protein of the phosphoenolpyruvate-dependent sugar phosphotransferase system (PTS). HprK/P also catalyzes the pyrophosphate-producing, inorganic phosphate-dependent dephosphorylation (phosphorolysis) of seryl-phosphorylated HPr (P-Ser-HPr). The two antagonistic activities of HprK/P are regulated by several intracellular metabolites, which change their concentration in response to the absence or presence of rapidly metabolisable carbon sources (glucose, fructose, etc.) in the growth medium. Therefore, by controlling the phosphorylation state of HPr, HPrK/P is a sensor enzyme that plays a major role in the regulation of carbon metabolism and sugar transport: it mediates carbon catabolite repression (CCR), and regulates PTS-catalyzed carbohydrate uptake and inducer exclusion. The polypeptide is HPr kinase/phosphorylase (Brevibacillus brevis (strain 47 / JCM 6285 / NBRC 100599)).